The primary structure comprises 248 residues: Transcription factor MYB1 (248 aa).

HTH myb-type domains lie at 9-61 and 62-116; these read KEGM…LNYL and RPGI…GRRV. 2 consecutive DNA-binding regions (H-T-H motif) follow at residues 37–61 and 89–112; these read WRSLPKRAGLKRCGKSCRLRWLNYL and WSLIAGRLPGRTDNEIKNYWNTNL. Residues 118–144 form a disordered region; sequence DQSHQHCRPNPTITSTKPADAPPANAN.

The protein localises to the nucleus. Its function is as follows. Transcription activator involved in the spatiotemporal regulation of flavonoid biosynthesis specifically in the corms of Montbretia. Activates the promoters of enzymes involved in the biosynthesis of the flavonol kaempferol and the flavonol-glycoside kaempferol-rhamnoside. The protein is Transcription factor MYB1 of Crocosmia x crocosmiiflora (Montbretia).